The chain runs to 157 residues: UPF0303 protein NT01EI_1570 (157 aa).

The protein belongs to the UPF0303 family.

The protein is UPF0303 protein NT01EI_1570 of Edwardsiella ictaluri (strain 93-146).